Consider the following 312-residue polypeptide: Methionyl-tRNA formyltransferase (312 aa).

107–110 is a binding site for (6S)-5,6,7,8-tetrahydrofolate; it reads SLLP.

It belongs to the Fmt family.

It catalyses the reaction L-methionyl-tRNA(fMet) + (6R)-10-formyltetrahydrofolate = N-formyl-L-methionyl-tRNA(fMet) + (6S)-5,6,7,8-tetrahydrofolate + H(+). Attaches a formyl group to the free amino group of methionyl-tRNA(fMet). The formyl group appears to play a dual role in the initiator identity of N-formylmethionyl-tRNA by promoting its recognition by IF2 and preventing the misappropriation of this tRNA by the elongation apparatus. In Borreliella burgdorferi (strain ZS7) (Borrelia burgdorferi), this protein is Methionyl-tRNA formyltransferase.